A 159-amino-acid chain; its full sequence is Cyclic pyranopterin monophosphate synthase (159 aa).

Substrate contacts are provided by residues Leu75–His77 and Met113–Glu114. Residue Asp128 is part of the active site.

Belongs to the MoaC family. In terms of assembly, homohexamer; trimer of dimers.

It carries out the reaction (8S)-3',8-cyclo-7,8-dihydroguanosine 5'-triphosphate = cyclic pyranopterin phosphate + diphosphate. It participates in cofactor biosynthesis; molybdopterin biosynthesis. In terms of biological role, catalyzes the conversion of (8S)-3',8-cyclo-7,8-dihydroguanosine 5'-triphosphate to cyclic pyranopterin monophosphate (cPMP). The sequence is that of Cyclic pyranopterin monophosphate synthase from Heliobacterium modesticaldum (strain ATCC 51547 / Ice1).